A 483-amino-acid polypeptide reads, in one-letter code: Xylulose kinase (483 aa).

Substrate is bound at residue 77 to 78; it reads MH. Asp-233 acts as the Proton acceptor in catalysis.

It belongs to the FGGY kinase family.

It carries out the reaction D-xylulose + ATP = D-xylulose 5-phosphate + ADP + H(+). Catalyzes the phosphorylation of D-xylulose to D-xylulose 5-phosphate. The protein is Xylulose kinase of Klebsiella pneumoniae.